The sequence spans 218 residues: Ras-related protein Rab-42 (218 aa).

The GTP site is built by alanine 19, glycine 21, lysine 22, threonine 23, and threonine 46. 3 residues coordinate Mg(2+): threonine 23, threonine 46, and aspartate 70. The GTP site is built by glycine 73, lysine 130, aspartate 132, valine 160, and lysine 161. 2 S-geranylgeranyl cysteine lipidation sites follow: cysteine 216 and cysteine 218.

This sequence belongs to the small GTPase superfamily. Rab family. Mg(2+) serves as cofactor.

The protein localises to the membrane. The enzyme catalyses GTP + H2O = GDP + phosphate + H(+). Regulated by guanine nucleotide exchange factors (GEFs) which promote the exchange of bound GDP for free GTP. Regulated by GTPase activating proteins (GAPs) which increase the GTP hydrolysis activity. Inhibited by GDP dissociation inhibitors (GDIs). In terms of biological role, the small GTPases Rab are key regulators of intracellular membrane trafficking, from the formation of transport vesicles to their fusion with membranes. Rabs cycle between an inactive GDP-bound form and an active GTP-bound form that is able to recruit to membranes different sets of downstream effectors directly responsible for vesicle formation, movement, tethering and fusion. The physiological function of RAB42 remains undefined. This is Ras-related protein Rab-42 from Homo sapiens (Human).